Here is a 252-residue protein sequence, read N- to C-terminus: Centromere protein V (252 aa).

The interval 1–80 (MRRTRSAVAT…EEPPPAVTPA (80 aa)) is disordered. S18 carries the phosphoserine modification. Residue R39 is modified to Omega-N-methylarginine. A compositionally biased stretch (pro residues) spans 54-64 (SAKPRPKPPPR). T78 bears the Phosphothreonine mark. Residues 125–237 (HTGGCHCGAV…TEEFNGSDWE (113 aa)) form the CENP-V/GFA domain. Residues C129, C131, C149, C151, C154, C193, and C196 each contribute to the Zn(2+) site. S234 bears the Phosphoserine mark.

This sequence belongs to the Gfa family. The cofactor is Zn(2+).

The protein localises to the chromosome. Its subcellular location is the centromere. The protein resides in the kinetochore. It is found in the nucleus. It localises to the cytoplasm. The protein localises to the cytoskeleton. Its subcellular location is the spindle. Functionally, required for distribution of pericentromeric heterochromatin in interphase nuclei and for centromere formation and organization, chromosome alignment and cytokinesis. The protein is Centromere protein V (Cenpv) of Mus musculus (Mouse).